The chain runs to 319 residues: MAKVPSVTLSSCGDDIQTMPVIGMGTSSYPRADPETAKAAILEAIRAGYRHFDTAAAYGSEKDLGEAIAEALRLQLIKSRDELFITTKLWASFAEKDLVLPSIKASLSNLQVEYIDMYIIHWPFKLGKEVRTMPVERDLVQPLDIKSVWEAMEECKKLGLARGIGVSNFTSSMLEELLSFAEIPPAVNQLEMNPAWQLKKLRDFCKAKGIHVTAYSPLGAARTKWGDDRVLGSDIIEEIAQAKGKSTAQISLRWVYEQGVSIVTKSYNKERMRQNLDIFDFCLTEEELEKMSHLPQRKGVTFASILGPHDIVLEVDEEL.

Tyr-58 acts as the Proton donor in catalysis. A substrate-binding site is contributed by His-121. 216-275 (SPLGAARTKWGDDRVLGSDIIEEIAQAKGKSTAQISLRWVYEQGVSIVTKSYNKERMRQN) is a binding site for NADP(+).

Belongs to the aldo/keto reductase family. Expressed specifically in the receptacle tissue of the fruit.

The enzyme catalyses L-galactonate + NADP(+) = aldehydo-D-galacturonate + NADPH + H(+). It functions in the pathway cofactor biosynthesis; L-ascorbate biosynthesis. Functionally, involved in ascorbic acid (vitamin C) biosynthesis. In Fragaria ananassa (Strawberry), this protein is D-galacturonate reductase (GALUR).